The following is an 820-amino-acid chain: MAITRRSFLKGVATTSAASVIGPSLLASASANAAESTGTWKVTGSHWGAFRAHIYAGKVQEIKPLELDKNPTEMLNGIKGIIYSPSRVRYPMVRLDWLKKHKYSADTRGNNRFIRVTWDEALDLFYRELERVQKEYGPWALHAGQTGWNQTGSFNNCTAHMQRAVGMHGNFITKVGDYSTGAGQTIMPYVLGSTEVYAQGTSWSEILENSDNIILWANDPVKNLQVGWNCETHESFKYLAELKEKVAKGEINVLSVDPVKNKTQRYLENDHLYINPMTDVAFMLAVAHVLYNENLYDKKFIDTYCLGFEEFIQYVQGKTKDKVEKTPEWAAAICGVKADKIREFARMLVSGRTQILMGWCIQRQEHGEQPYWAAAVVAAMVGQIGLPGGGISYGHHYSSIGVPSTGFAGPGGFPRNLDQGMKPKWDNNDFNGYSRTIPVARWIDCLLEPGKEINYNGGKVKLPDFKMMVISGCNPWHHHQDRNRMKKAFRKLQTVVTIEFAWTATCRFSDIVLPACTQWERNDIDVYGSYSNKGLIAMHRLVDPLFQSKPDFQIMSELTQRFGRREEYTRGMSEMEWIESLYNDCKKANEGKFEMPEFNEFWEKSVLDFGEGKPWVRHADFRKDPELNPLGTPSGFIEITSRKIGRYGYEHCQEHPMWFEKSERSHGGPGSDKYPFWLQSCHPDKRLHSQMCESEEFRATYAVQGREPVYINPIDAKAKGIKDGDLVRVFNGRGQLLAGAVLTDSYPRGVIRIEEGAWYGPLNEKEGAICTYGDPNTLTQDIGSSELAQATSANTCIVDFEKFTGKVPPVTSFGGPIEVA.

Positions 1 to 33 (MAITRRSFLKGVATTSAASVIGPSLLASASANA) form a signal peptide, tat-type signal. Serine 179 serves as a coordination point for Mo-bis(molybdopterin guanine dinucleotide).

The protein belongs to the prokaryotic molybdopterin-containing oxidoreductase family. It depends on Mo-bis(molybdopterin guanine dinucleotide) as a cofactor. In terms of processing, predicted to be exported by the Tat system. The position of the signal peptide cleavage has not been experimentally proven.

The protein resides in the periplasm. The catalysed reaction is trimethylamine + 2 Fe(III)-[cytochrome c] + H2O = trimethylamine N-oxide + 2 Fe(II)-[cytochrome c] + 3 H(+). Functionally, reduces trimethylamine-N-oxide (TMAO) into trimethylamine; an anaerobic reaction coupled to energy-yielding reactions. This chain is Trimethylamine-N-oxide reductase (torA), found in Vibrio parahaemolyticus serotype O3:K6 (strain RIMD 2210633).